The following is a 72-amino-acid chain: Putative DNA-directed RNA polymerase subunit omega (72 aa).

It belongs to the RNA polymerase subunit omega family.

The protein localises to the plastid. The protein resides in the chloroplast. The catalysed reaction is RNA(n) + a ribonucleoside 5'-triphosphate = RNA(n+1) + diphosphate. In terms of biological role, may be involved in RNA polymerase activity. The sequence is that of Putative DNA-directed RNA polymerase subunit omega (rpoZ) from Cyanidium caldarium (Red alga).